The following is a 549-amino-acid chain: Chaperonin GroEL 2 (549 aa).

ATP-binding positions include 30–33 (TLGP), lysine 51, 87–91 (DGTTT), glycine 415, 479–481 (NAA), and aspartate 495.

The protein belongs to the chaperonin (HSP60) family. In terms of assembly, forms a cylinder of 14 subunits composed of two heptameric rings stacked back-to-back. Interacts with the co-chaperonin GroES.

The protein resides in the cytoplasm. It carries out the reaction ATP + H2O + a folded polypeptide = ADP + phosphate + an unfolded polypeptide.. Its function is as follows. Together with its co-chaperonin GroES, plays an essential role in assisting protein folding. The GroEL-GroES system forms a nano-cage that allows encapsulation of the non-native substrate proteins and provides a physical environment optimized to promote and accelerate protein folding. The chain is Chaperonin GroEL 2 from Polaromonas naphthalenivorans (strain CJ2).